Consider the following 457-residue polypeptide: Multidrug resistance protein MdtK (457 aa).

Helical transmembrane passes span 11–31 (LLALAIPVILAQVAQTAMGFV), 53–73 (IWLPAILFGHGLLLALTPVIA), 93–113 (WLASFVSVLVMIVLWNAGYII), 127–147 (AVGYLRALLWGAPGYLFFQVA), 160–180 (GMVMGFLGLLVNIPVNYIFIY), 188–208 (LGGIGCGVATAAVYWVMFIAM), 243–263 (LPIALALFFEVTLFAVVALLV), 276–296 (IALNFSSLMFVLPMSLAAAVT), 314–334 (AARTGLSVGVCMAVVTAIFTV), 357–377 (LMLLAAVYQISDSIQVIGSGI), 387–407 (IFFITFTAYWVLGLPSGYILA), and 418–438 (PAGFWMGFIIGLTSAAVLMML).

This sequence belongs to the multi antimicrobial extrusion (MATE) (TC 2.A.66.1) family. MdtK subfamily.

The protein localises to the cell inner membrane. Multidrug efflux pump that functions probably as a Na(+)/drug antiporter. The sequence is that of Multidrug resistance protein MdtK from Salmonella arizonae (strain ATCC BAA-731 / CDC346-86 / RSK2980).